A 304-amino-acid chain; its full sequence is Hairy/enhancer-of-split related with YRPW motif protein 1 (304 aa).

The tract at residues methionine 1–arginine 52 is disordered. The span at glutamate 28–isoleucine 47 shows a compositional bias: polar residues. The tract at residues leucine 48–alanine 117 is transcriptional repression and interaction with NCOR1 and SIN3A. The 56-residue stretch at alanine 49–leucine 104 folds into the bHLH domain. The Orange domain maps to tyrosine 122–leucine 158. The disordered stretch occupies residues alanine 191–serine 234. Over residues glycine 200–proline 210 the composition is skewed to polar residues. Low complexity predominate over residues arginine 218–serine 234.

This sequence belongs to the HEY family. As to quaternary structure, self-associates. Interacts with HES1 and HEYL. Interacts with HDAC1, NCOR1 and SIN3A. Interacts with GATA4 and GATA6. Interacts with CCDC89/BOIP.

It localises to the nucleus. Transcriptional repressor which binds preferentially to the canonical E box sequence 5'-CACGTG-3'. Downstream effector of Notch signaling required for cardiovascular development. Specifically required for the Notch-induced endocardial epithelial to mesenchymal transition, which is itself criticial for cardiac valve and septum development. May be required in conjunction with HEY2 to specify arterial cell fate or identity. Promotes maintenance of neuronal precursor cells and glial versus neuronal fate specification. Represses transcription by the cardiac transcriptional activators GATA4 and GATA6 and by the neuronal bHLH factors ASCL1/MASH1 and NEUROD4/MATH3. The protein is Hairy/enhancer-of-split related with YRPW motif protein 1 (HEY1) of Canis lupus familiaris (Dog).